The sequence spans 252 residues: 5'-nucleotidase SurE (252 aa).

Residues Asp-8, Asp-9, Ser-39, and Asn-91 each coordinate a divalent metal cation.

It belongs to the SurE nucleotidase family. A divalent metal cation is required as a cofactor.

It localises to the cytoplasm. It carries out the reaction a ribonucleoside 5'-phosphate + H2O = a ribonucleoside + phosphate. Its function is as follows. Nucleotidase that shows phosphatase activity on nucleoside 5'-monophosphates. The sequence is that of 5'-nucleotidase SurE from Bordetella bronchiseptica (strain ATCC BAA-588 / NCTC 13252 / RB50) (Alcaligenes bronchisepticus).